The sequence spans 153 residues: Insulin-like growth factor 1 (153 aa).

The b stretch occupies residues 49–77; sequence GPETLCGAELVDALQFVCGPRGFYFNKPT. 3 disulfide bridges follow: Cys54–Cys96, Cys66–Cys109, and Cys95–Cys100. Residues 78-89 form a c region; that stretch reads GYGSSIRRAPQT. Positions 90–110 are a; it reads GIVDECCFRSCDLRRLEMYCA. The tract at residues 111-118 is d; sequence PLKPTKAA. Positions 119 to 153 are cleaved as a propeptide — e peptide; the sequence is RSIRAQRHTDMPKTQKEVHLKNTSRGSAGNKTYRM. Residues 120–153 are disordered; the sequence is SIRAQRHTDMPKTQKEVHLKNTSRGSAGNKTYRM. A compositionally biased stretch (basic and acidic residues) spans 125-138; it reads RHTDMPKTQKEVHL. The segment covering 139–153 has biased composition (polar residues); it reads KNTSRGSAGNKTYRM.

This sequence belongs to the insulin family. As to quaternary structure, forms a ternary complex with IGFR1 and ITGAV:ITGB3. Forms a ternary complex with IGFR1 and ITGA6:ITGB4. Interacts with SH2D3C isoform 2. Forms a ternary complex with IGFBP3 and ALS.

It is found in the secreted. In terms of biological role, the insulin-like growth factors, isolated from plasma, are structurally and functionally related to insulin but have a much higher growth-promoting activity. May be a physiological regulator of [1-14C]-2-deoxy-D-glucose (2DG) transport and glycogen synthesis in osteoblasts. Stimulates glucose transport in bone-derived osteoblastic (PyMS) cells and is effective at much lower concentrations than insulin, not only regarding glycogen and DNA synthesis but also with regard to enhancing glucose uptake. May play a role in synapse maturation. Ca(2+)-dependent exocytosis of IGF1 is required for sensory perception of smell in the olfactory bulb. Acts as a ligand for IGF1R. Binds to the alpha subunit of IGF1R, leading to the activation of the intrinsic tyrosine kinase activity which autophosphorylates tyrosine residues in the beta subunit thus initiating a cascade of down-stream signaling events leading to activation of the PI3K-AKT/PKB and the Ras-MAPK pathways. Binds to integrins ITGAV:ITGB3 and ITGA6:ITGB4. Its binding to integrins and subsequent ternary complex formation with integrins and IGFR1 are essential for IGF1 signaling. Induces the phosphorylation and activation of IGFR1, MAPK3/ERK1, MAPK1/ERK2 and AKT1. As part of the MAPK/ERK signaling pathway, acts as a negative regulator of apoptosis in cardiomyocytes via promotion of STUB1/CHIP-mediated ubiquitination and degradation of ICER-type isoforms of CREM. This is Insulin-like growth factor 1 from Mus musculus (Mouse).